Reading from the N-terminus, the 502-residue chain is Lysine--tRNA ligase (502 aa).

Positions 403 and 410 each coordinate Mg(2+).

Belongs to the class-II aminoacyl-tRNA synthetase family. As to quaternary structure, homodimer. The cofactor is Mg(2+).

It is found in the cytoplasm. The catalysed reaction is tRNA(Lys) + L-lysine + ATP = L-lysyl-tRNA(Lys) + AMP + diphosphate. This Parasynechococcus marenigrum (strain WH8102) protein is Lysine--tRNA ligase.